Consider the following 654-residue polypeptide: Kelch-like protein 13 (654 aa).

Residues 91 to 160 (CDVTLMPGDT…IYTAKLSLNM (70 aa)) enclose the BTB domain. Residues 195-296 (CVEVGRIANT…TPQELINYVQ (102 aa)) enclose the BACK domain. Kelch repeat units lie at residues 340 to 388 (RLVT…VIGN), 389 to 440 (FLYV…ALKG), 441 to 487 (FLYA…VYGG), 489 to 534 (MYIS…TVGD), 536 to 586 (LYVI…VFEN), and 587 to 635 (KIYV…TLTV).

In terms of assembly, component of the BCR(KLHL9-KLHL13) E3 ubiquitin ligase complex, at least composed of CUL3, KLHL9, KLHL13 and RBX1. Interacts with AURKB.

It participates in protein modification; protein ubiquitination. Its function is as follows. Substrate-specific adapter of a BCR (BTB-CUL3-RBX1) E3 ubiquitin-protein ligase complex required for mitotic progression and cytokinesis. The BCR(KLHL9-KLHL13) E3 ubiquitin ligase complex mediates the ubiquitination of AURKB and controls the dynamic behavior of AURKB on mitotic chromosomes and thereby coordinates faithful mitotic progression and completion of cytokinesis. In Mus musculus (Mouse), this protein is Kelch-like protein 13 (Klhl13).